A 315-amino-acid polypeptide reads, in one-letter code: Rhomboid-related protein 4 (315 aa).

Residues 1–21 (MQRRTRGINTGLLLLLSQVFQ) are Cytoplasmic-facing. Residues 22–42 (IGINNIPPVTLATLAVNVWFF) form a helical membrane-spanning segment. The Lumenal segment spans residues 43–103 (LNPWKPLYHS…KLERRLGSRW (61 aa)). Residues 104-124 (FAYVIATFSLLTGVVYLLLQF) form a helical membrane-spanning segment. Residues 125–137 (TVAELLNQPDFKR) lie on the Cytoplasmic side of the membrane. Residues 138–154 (NCAVGFSGVLFALKVLS) form a helical membrane-spanning segment. The Nucleophile role is filled by Ser-144. At 155-180 (NHYCPGGFVNILGFPVPNRFACWAEL) the chain is on the lumenal side. Residues 181–201 (VAIHFCTPGTSFAGHLAGILV) traverse the membrane as a helical segment. The active site involves His-195. The Cytoplasmic portion of the chain corresponds to 202 to 315 (GLMYTQGPLK…RQRLHRFDGQ (114 aa)). Positions 269–284 (SEEEQLERALRASIWD) are ubiquitin-binding domain (UBD). The interval 301–315 (PEEMRRQRLHRFDGQ) is VCP/p97-interacting motif (VIM).

The protein belongs to the peptidase S54 family. Interacts with BIK and STEAP3. Interacts (via C-terminal domain) with VCP/P97. Interacts with ubiquitin and ubiquitinated proteins. In terms of tissue distribution, expressed in testis (at protein level). Expressed in intestine, lung, brain, kidney, epididymis, stomach, muscle, spleen, liver, heart and testis.

The protein resides in the endoplasmic reticulum membrane. It localises to the mitochondrion membrane. It catalyses the reaction Cleaves type-1 transmembrane domains using a catalytic dyad composed of serine and histidine that are contributed by different transmembrane domains.. Its activity is regulated as follows. Inhibited by aprotinin. Functionally, intramembrane-cleaving serine protease that cleaves single transmembrane or multi-pass membrane proteins in the hydrophobic plane of the membrane, luminal loops and juxtamembrane regions. Involved in regulated intramembrane proteolysis and the subsequent release of functional polypeptides from their membrane anchors. Functional component of endoplasmic reticulum-associated degradation (ERAD) for misfolded membrane proteins. Required for the degradation process of some specific misfolded endoplasmic reticulum (ER) luminal proteins. Participates in the transfer of misfolded proteins from the ER to the cytosol, where they are destroyed by the proteasome in a ubiquitin-dependent manner. Functions in BIK, MPZ, PKD1, PTCRA, RHO, STEAP3 and TRAC processing. Involved in the regulation of exosomal secretion; inhibits the TSAP6-mediated secretion pathway. Involved in the regulation of apoptosis; modulates BIK-mediated apoptotic activity. Also plays a role in the regulation of spermatogenesis; inhibits apoptotic activity in spermatogonia. This Mus musculus (Mouse) protein is Rhomboid-related protein 4 (Rhbdd1).